The following is a 602-amino-acid chain: mRNA-capping enzyme subunit beta (602 aa).

Residues 1–249 (MSEHHSKRAL…NESNSEETHD (249 aa)) are disordered. The span at 15 to 42 (LVNHDENDKSKLQKLADNESSVRSDDNR) shows a compositional bias: basic and acidic residues. The span at 48–64 (NIVNGNNSNSDLNSNGV) shows a compositional bias: low complexity. Residues 65-76 (IEEDTDTDDDVG) are compositionally biased toward acidic residues. Basic and acidic residues predominate over residues 88 to 110 (DYDKQDRFSPEKKRIQARKKDTS). A compositionally biased stretch (low complexity) spans 114 to 128 (PSISNESPSNSKESS). Positions 141-169 (TDRKDSSEEKPDLTGPELVKEPDTNEYKR) are enriched in basic and acidic residues. A compositionally biased stretch (polar residues) spans 171–181 (SIQSITNAEDT). Basic and acidic residues-rich tracts occupy residues 213–222 (TEEHKPKTET) and 231–249 (QENK…ETHD). Catalysis depends on K276, which acts as the N6-GMP-lysine intermediate.

This sequence belongs to the fungal TPase family. In terms of assembly, heterodimer. The mRNA-capping enzyme is composed of two separate chains alpha and beta, respectively a mRNA guanylyltransferase and an mRNA 5'-triphosphate monophosphatase. It depends on Mg(2+) as a cofactor.

It is found in the nucleus. It carries out the reaction a 5'-end triphospho-ribonucleoside in mRNA + H2O = a 5'-end diphospho-ribonucleoside in mRNA + phosphate + H(+). First step of mRNA capping. Converts the 5'-triphosphate end of a nascent mRNA chain into a diphosphate end. In Candida glabrata (strain ATCC 2001 / BCRC 20586 / JCM 3761 / NBRC 0622 / NRRL Y-65 / CBS 138) (Yeast), this protein is mRNA-capping enzyme subunit beta (CET1).